We begin with the raw amino-acid sequence, 165 residues long: Ubiquitin-conjugating enzyme E2 G2 (165 aa).

At Ala2 the chain carries N-acetylalanine. A UBC core domain is found at 4–164; that stretch reads TALKRLMAEY…AKQIVQKSLG (161 aa). Cys89 (glycyl thioester intermediate) is an active-site residue.

The protein belongs to the ubiquitin-conjugating enzyme family. In terms of assembly, interacts with AUP1 (via C-terminus); the interaction recruits UBE2G2 to lipid droplets. Interacts with ubiquitin ligases AMFR/gp78 and RNF139/TRC8; recruitment to lipid droplets by AUP1 facilitates interaction of UBE2G2 with AMFR and RNF139, leading to sterol-induced ubiquitination of 3-hydroxy-3-methylglutaryl coenzyme A reductase and its subsequent proteasomal degradation.

It is found in the endoplasmic reticulum. Its subcellular location is the lipid droplet. It carries out the reaction S-ubiquitinyl-[E1 ubiquitin-activating enzyme]-L-cysteine + [E2 ubiquitin-conjugating enzyme]-L-cysteine = [E1 ubiquitin-activating enzyme]-L-cysteine + S-ubiquitinyl-[E2 ubiquitin-conjugating enzyme]-L-cysteine.. The protein operates within protein modification; protein ubiquitination. Accepts ubiquitin from the E1 complex and catalyzes its covalent attachment to other proteins. In vitro catalyzes 'Lys-48'-linked polyubiquitination. Involved in endoplasmic reticulum-associated degradation (ERAD). Required for sterol-induced ubiquitination of 3-hydroxy-3-methylglutaryl coenzyme A reductase and its subsequent proteasomal degradation. This Bos taurus (Bovine) protein is Ubiquitin-conjugating enzyme E2 G2.